The chain runs to 121 residues: MKHRIGRVEGEILRELTKILQKNIRDPRLSEVTITAVECMNDLSYATVYYSLLTEDANKEKEVQEGLEKAKGMMRHLLGQTLTVYKVPELIFKRDNSVKYGSKIDRLIAEVKKQDAERASK.

Belongs to the RbfA family. As to quaternary structure, monomer. Binds 30S ribosomal subunits, but not 50S ribosomal subunits or 70S ribosomes.

Its subcellular location is the cytoplasm. One of several proteins that assist in the late maturation steps of the functional core of the 30S ribosomal subunit. Associates with free 30S ribosomal subunits (but not with 30S subunits that are part of 70S ribosomes or polysomes). Required for efficient processing of 16S rRNA. May interact with the 5'-terminal helix region of 16S rRNA. The chain is Ribosome-binding factor A from Lactobacillus helveticus (strain DPC 4571).